The sequence spans 156 residues: ATP synthase subunit b (156 aa).

Residues 7–29 (LFAQMVVFLVLAWFTMKFVWPPL) traverse the membrane as a helical segment.

The protein belongs to the ATPase B chain family. F-type ATPases have 2 components, F(1) - the catalytic core - and F(0) - the membrane proton channel. F(1) has five subunits: alpha(3), beta(3), gamma(1), delta(1), epsilon(1). F(0) has three main subunits: a(1), b(2) and c(10-14). The alpha and beta chains form an alternating ring which encloses part of the gamma chain. F(1) is attached to F(0) by a central stalk formed by the gamma and epsilon chains, while a peripheral stalk is formed by the delta and b chains.

The protein localises to the cell inner membrane. F(1)F(0) ATP synthase produces ATP from ADP in the presence of a proton or sodium gradient. F-type ATPases consist of two structural domains, F(1) containing the extramembraneous catalytic core and F(0) containing the membrane proton channel, linked together by a central stalk and a peripheral stalk. During catalysis, ATP synthesis in the catalytic domain of F(1) is coupled via a rotary mechanism of the central stalk subunits to proton translocation. In terms of biological role, component of the F(0) channel, it forms part of the peripheral stalk, linking F(1) to F(0). This chain is ATP synthase subunit b, found in Burkholderia lata (strain ATCC 17760 / DSM 23089 / LMG 22485 / NCIMB 9086 / R18194 / 383).